The following is a 245-amino-acid chain: Phycocyanobilin:ferredoxin oxidoreductase (245 aa).

It belongs to the HY2 family.

The enzyme catalyses (2R,3Z)-phycocyanobilin + 4 oxidized [2Fe-2S]-[ferredoxin] = biliverdin IXalpha + 4 reduced [2Fe-2S]-[ferredoxin] + 4 H(+). In terms of biological role, catalyzes the four-electron reduction of biliverdin IX-alpha (2-electron reduction at both the A and D rings); the reaction proceeds via an isolatable 2-electron intermediate, 181,182-dihydrobiliverdin. This Gloeothece citriformis (strain PCC 7424) (Cyanothece sp. (strain PCC 7424)) protein is Phycocyanobilin:ferredoxin oxidoreductase.